Here is a 414-residue protein sequence, read N- to C-terminus: Alanine--glyoxylate aminotransferase (414 aa).

A mitochondrion-targeting transit peptide spans M1–M23. K231 carries the post-translational modification N6-(pyridoxal phosphate)lysine. K247 is modified (N6-acetyllysine; alternate). K247 bears the N6-succinyllysine; alternate mark. 2 positions are modified to N6-acetyllysine: K256 and K334. R382 is a substrate binding site. Residues N412–L414 carry the Microbody targeting signal motif.

The protein belongs to the class-V pyridoxal-phosphate-dependent aminotransferase family. Homodimer. Pyridoxal 5'-phosphate serves as cofactor.

Its subcellular location is the peroxisome. It localises to the mitochondrion matrix. It carries out the reaction L-serine + pyruvate = 3-hydroxypyruvate + L-alanine. It catalyses the reaction glyoxylate + L-alanine = glycine + pyruvate. Its function is as follows. Catalyzes the transamination of glyoxylate to glycine and contributes to the glyoxylate detoxification. In terms of biological role, catalyzes the transamination between L-serine and pyruvate and contributes to gluconeogenesis from the L-serine metabolism. The chain is Alanine--glyoxylate aminotransferase from Felis catus (Cat).